Reading from the N-terminus, the 165-residue chain is Small ribosomal subunit protein uS13 (165 aa).

Positions 139–165 (GMTIGVARKKAAQPQSQQSSSQQQKSS) are disordered. Low complexity predominate over residues 153–165 (QSQQSSSQQQKSS).

Belongs to the universal ribosomal protein uS13 family. As to quaternary structure, part of the 30S ribosomal subunit. Forms a loose heterodimer with protein S19. Forms two bridges to the 50S subunit in the 70S ribosome.

Its function is as follows. Located at the top of the head of the 30S subunit, it contacts several helices of the 16S rRNA. In the 70S ribosome it contacts the 23S rRNA (bridge B1a) and protein L5 of the 50S subunit (bridge B1b), connecting the 2 subunits; these bridges are implicated in subunit movement. This is Small ribosomal subunit protein uS13 from Saccharolobus solfataricus (strain ATCC 35092 / DSM 1617 / JCM 11322 / P2) (Sulfolobus solfataricus).